The primary structure comprises 150 residues: UPF0208 membrane protein VS_0999 (150 aa).

The next 2 helical transmembrane spans lie at 42-62 and 70-90; these read FGVKVMPAIAAISVLTQMVFN and AVVMALFAISLPLQGMWWLGN.

This sequence belongs to the UPF0208 family.

The protein localises to the cell inner membrane. This Vibrio atlanticus (strain LGP32) (Vibrio splendidus (strain Mel32)) protein is UPF0208 membrane protein VS_0999.